We begin with the raw amino-acid sequence, 326 residues long: Biotin synthase (326 aa).

One can recognise a Radical SAM core domain in the interval 51 to 275 (NAVQRSTLLS…MMPTSFVRLS (225 aa)). [4Fe-4S] cluster contacts are provided by C66, C70, and C73. 4 residues coordinate [2Fe-2S] cluster: C110, C141, C201, and R273.

This sequence belongs to the radical SAM superfamily. Biotin synthase family. As to quaternary structure, homodimer. It depends on [4Fe-4S] cluster as a cofactor. The cofactor is [2Fe-2S] cluster.

It catalyses the reaction (4R,5S)-dethiobiotin + (sulfur carrier)-SH + 2 reduced [2Fe-2S]-[ferredoxin] + 2 S-adenosyl-L-methionine = (sulfur carrier)-H + biotin + 2 5'-deoxyadenosine + 2 L-methionine + 2 oxidized [2Fe-2S]-[ferredoxin]. Its pathway is cofactor biosynthesis; biotin biosynthesis; biotin from 7,8-diaminononanoate: step 2/2. Its function is as follows. Catalyzes the conversion of dethiobiotin (DTB) to biotin by the insertion of a sulfur atom into dethiobiotin via a radical-based mechanism. The protein is Biotin synthase of Aromatoleum aromaticum (strain DSM 19018 / LMG 30748 / EbN1) (Azoarcus sp. (strain EbN1)).